The sequence spans 620 residues: Translocator protein BipB (620 aa).

The tract at residues 58–95 (QCDAQPAAHDARLDDKPALRAPQERDAPPLGASDTGSR) is disordered. A compositionally biased stretch (basic and acidic residues) spans 66 to 84 (HDARLDDKPALRAPQERDA). Positions 309 to 339 (EMQAKREAELQKKSDEYQAQVKKAEEMQKTM) form a coiled coil. Helical transmembrane passes span 355–375 (FAAA…GLAL), 401–421 (AILK…LVAC), and 430–450 (LAGA…AAFV).

This sequence belongs to the SctE/SipB/YopB family.

It is found in the secreted. The protein resides in the host membrane. In terms of biological role, plays a role in the bacterium-induced formation of multinucleated giant cell (MNGC), which is formed after host cell fusion, as well as in the intercellular spreading of bacteria and in the induction of apoptosis in macrophages. May act in concert with other effector proteins to induce fusion of host cell membranes. The protein is Translocator protein BipB (bipB) of Burkholderia pseudomallei (strain 1106a).